The sequence spans 281 residues: 40S small subunit processome assembly factor 1 (281 aa).

Residues 29-141 are disordered; sequence LGETEGETEQ…DEDEPAKNKT (113 aa). Residues Ser67 and Ser75 each carry the phosphoserine modification. Lys172 bears the N6-acetyllysine mark. The tract at residues 221 to 254 is disordered; the sequence is ETDIFKKKKKKGRGQEDRRSKKSAPSILSSGQVG. Phosphoserine is present on Ser267.

Part of the small subunit (SSU) processome, composed of more than 70 proteins and the RNA chaperone small nucleolar RNA (snoRNA) U3.

Its subcellular location is the chromosome. The protein localises to the nucleus. It is found in the nucleolus. Its function is as follows. Part of the small subunit (SSU) processome, first precursor of the small eukaryotic ribosomal subunit. During the assembly of the SSU processome in the nucleolus, many ribosome biogenesis factors, an RNA chaperone and ribosomal proteins associate with the nascent pre-rRNA and work in concert to generate RNA folding, modifications, rearrangements and cleavage as well as targeted degradation of pre-ribosomal RNA by the RNA exosome. Prevents helicase DHX37 to be recruited before post-A1 state. This is 40S small subunit processome assembly factor 1 from Mus musculus (Mouse).